Consider the following 331-residue polypeptide: Serpentine receptor class alpha-1 (331 aa).

The next 7 membrane-spanning stretches (helical) occupy residues Phe22–Val42, Ile57–Ser77, Tyr104–Ile124, Val143–Ile163, Phe189–Phe209, Ile238–Ile258, and Leu274–Phe294.

It belongs to the nematode receptor-like protein sra family.

It is found in the membrane. In Caenorhabditis elegans, this protein is Serpentine receptor class alpha-1 (sra-1).